Consider the following 531-residue polypeptide: Tyrosine 2,3-aminomutase (531 aa).

Residue Tyr51 is the Proton donor/acceptor of the active site. His81 lines the substrate pocket. Residues 140-142 (ASG) constitute a cross-link (5-imidazolinone (Ala-Gly)). Residue Ser141 is modified to 2,3-didehydroalanine (Ser). Residues Asn193 and Arg298 each contribute to the substrate site.

It belongs to the TAL/TAM family. As to quaternary structure, homotetramer; dimer of dimers. In terms of processing, contains an active site 4-methylidene-imidazol-5-one (MIO), which is formed autocatalytically by cyclization and dehydration of residues Ala-Ser-Gly.

It carries out the reaction L-tyrosine = 3-amino-3-(4-hydroxyphenyl)propanoate. The catalysed reaction is L-tyrosine = (E)-4-coumarate + NH4(+). Has aminomutase and, to a lesser extent, ammonia-lyase activity. Primarily, catalyzes the rearrangement of L-tyrosine to R-beta-tyrosine, which is incorporated into secondary metabolites called chondramides. The aminomutase activity mainly produces R-beta-tyrosine but also S-beta tyrosine in smaller amounts. Does not accept D-tyrosine, L-histidine or L-phenylalanine as substrates. The chain is Tyrosine 2,3-aminomutase from Chondromyces crocatus.